Consider the following 414-residue polypeptide: Enolase (414 aa).

Position 162 (Gln-162) interacts with (2R)-2-phosphoglycerate. The active-site Proton donor is the Glu-204. The Mg(2+) site is built by Asp-239, Glu-280, and Asp-307. Lys-332, Arg-361, Ser-362, and Lys-383 together coordinate (2R)-2-phosphoglycerate. Lys-332 (proton acceptor) is an active-site residue.

Belongs to the enolase family. Mg(2+) is required as a cofactor.

The protein resides in the cytoplasm. The protein localises to the secreted. Its subcellular location is the cell surface. The enzyme catalyses (2R)-2-phosphoglycerate = phosphoenolpyruvate + H2O. Its pathway is carbohydrate degradation; glycolysis; pyruvate from D-glyceraldehyde 3-phosphate: step 4/5. Catalyzes the reversible conversion of 2-phosphoglycerate (2-PG) into phosphoenolpyruvate (PEP). It is essential for the degradation of carbohydrates via glycolysis. This is Enolase from Campylobacter jejuni subsp. jejuni serotype O:6 (strain 81116 / NCTC 11828).